A 140-amino-acid polypeptide reads, in one-letter code: Resuscitation-promoting factor RpfC (140 aa).

Residues 1-31 (MTRIAKPLIKSAMAAGLVTASMSLSTAVAHA) form the signal peptide.

It belongs to the transglycosylase family. Rpf subfamily.

Its subcellular location is the secreted. Its function is as follows. Factor that stimulates resuscitation of dormant cells. Has peptidoglycan (PG) hydrolytic activity. This Mycobacterium tuberculosis (strain ATCC 35801 / TMC 107 / Erdman) protein is Resuscitation-promoting factor RpfC (rpfC).